We begin with the raw amino-acid sequence, 251 residues long: MASEKASNPKARYQRILLKLSGEALMGDGKYGISPKTLTSIAHDVKDVVDLGVEVALTIGGGNIFRGVSGATEGMDRSSADYMGMLATVINSMALQDALEKIGVPTRVQSAIEMHQVAEPYIRRRAIRHLEKGRVVIFAAGTGNPYFTTDTAASLRAMEIHADVLLKATKVDGVYTDDPKKNPAATKFKQLSYIDVLKKNLKVMDSTAISLCMDNDLPIVVFDLTQRGNVRKVVLGEEIGTTVGRPSARNA.

Position 19–22 (19–22 (KLSG)) interacts with ATP. Residue Gly-61 coordinates UMP. ATP is bound by residues Gly-62 and Arg-66. UMP contacts are provided by residues Asp-81 and 142-149 (TGNPYFTT). ATP is bound by residues Thr-169, Tyr-175, and Asp-178.

Belongs to the UMP kinase family. Homohexamer.

The protein resides in the cytoplasm. The enzyme catalyses UMP + ATP = UDP + ADP. The protein operates within pyrimidine metabolism; CTP biosynthesis via de novo pathway; UDP from UMP (UMPK route): step 1/1. Inhibited by UTP. In terms of biological role, catalyzes the reversible phosphorylation of UMP to UDP. This is Uridylate kinase from Anaeromyxobacter dehalogenans (strain 2CP-C).